Consider the following 173-residue polypeptide: Placenta-specific protein 1 (173 aa).

The N-terminal stretch at 1 to 23 (MNLRKFLGGTVLVAFMLFSYSEQ) is a signal peptide.

Belongs to the PLAC1 family. In terms of tissue distribution, expressed in placenta.

It is found in the secreted. In terms of biological role, may play a role in placental development. This Mus musculus (Mouse) protein is Placenta-specific protein 1.